We begin with the raw amino-acid sequence, 269 residues long: Putative pyridoxine kinase (269 aa).

An ATP-binding site is contributed by Asn139. Glu142 lines the Mg(2+) pocket. ATP-binding positions include 176 to 180, Asp189, Val205, Gly214, and Lys239; that span reads KGGGR.

Belongs to the ThiD family.

The catalysed reaction is pyridoxal + ATP = pyridoxal 5'-phosphate + ADP + H(+). Its function is as follows. Phosphorylates B6 vitamers; functions in a salvage pathway. Uses pyridoxal, pyridoxine, and pyridoxamine as substrates. The protein is Putative pyridoxine kinase (pdxK) of Treponema pallidum (strain Nichols).